Reading from the N-terminus, the 147-residue chain is Ubiquitin-conjugating enzyme E2 4 (147 aa).

The UBC core domain occupies Met1 to Ile147. The active-site Glycyl thioester intermediate is Cys85.

Belongs to the ubiquitin-conjugating enzyme family. As to quaternary structure, interacts with the E1 ubiquitin-activating enzyme ptr3 and E3 ubiquitin-protein ligase pub2.

The enzyme catalyses S-ubiquitinyl-[E1 ubiquitin-activating enzyme]-L-cysteine + [E2 ubiquitin-conjugating enzyme]-L-cysteine = [E1 ubiquitin-activating enzyme]-L-cysteine + S-ubiquitinyl-[E2 ubiquitin-conjugating enzyme]-L-cysteine.. It participates in protein modification; protein ubiquitination. Functionally, E2 ubiquitin-conjugating enzyme that catalyzes the covalent attachment of ubiquitin to other proteins. Mediates the selective degradation of short-lived and abnormal proteins. Mediates ubiquitination of pex5. In Schizosaccharomyces pombe (strain 972 / ATCC 24843) (Fission yeast), this protein is Ubiquitin-conjugating enzyme E2 4 (ubc4).